The sequence spans 436 residues: MSDSTWMSADPHLASSLSPSQDERMRSPQNLHSQEDDDSSSESGSGNGSSTLNPSTSSSTQGDPAFPEMNGNGAVAPMDFTTAAEDQPINLCDKLPPATALGTASYPSDGCGADGLRSRVKYGVKTTPESPPYSSGSYDSIKTEVSGCPEDLTVGRAPTADDDDDDHDDHEDNDKMNDSEGMDPERLKAFNMFVRLFVDENLDRMVPISKQPKEKIQAIIESCSRQFPEFQERARKRIRTYLKSCRRMKKNGMEMTRPTPPHLTSAMAENILAAACESETRKAAKRMRLEIYQSSQDEPIALDKQHSRDSAAITHSTYSLPASSYSQDPVYANGGLNYSYRGYGALSSNLQPPASLQTGNHSNGPTDLSMKGGASTTSTTPTPTPSSTSTSRPVPTAQLSPTEISAVRQLIAGYRESAAFLLRSADELENLILQQN.

Positions 1 to 184 (MSDSTWMSAD…KMNDSEGMDP (184 aa)) are disordered. Residues 41–61 (SESGSGNGSSTLNPSTSSSTQ) are compositionally biased toward low complexity. The residue at position 130 (S130) is a Phosphoserine. The span at 160-169 (ADDDDDDHDD) shows a compositional bias: acidic residues. Positions 170–184 (HEDNDKMNDSEGMDP) are enriched in basic and acidic residues. The residue at position 295 (S295) is a Phosphoserine. Positions 351–366 (QPPASLQTGNHSNGPT) are enriched in polar residues. The segment at 351–400 (QPPASLQTGNHSNGPTDLSMKGGASTTSTTPTPTPSSTSTSRPVPTAQLS) is disordered. Low complexity predominate over residues 375–396 (STTSTTPTPTPSSTSTSRPVPT).

This Homo sapiens (Human) protein is Nucleolar protein 4-like (NOL4L).